A 328-amino-acid chain; its full sequence is L-asparaginase (328 aa).

Residues 1–320 enclose the Asparaginase/glutaminase domain; the sequence is MKLLVLGTGG…EEIRKIMERN (320 aa). The active-site Nucleophile; O-isoaspartyl threonine intermediate is threonine 11. Positions 11, 53, 54, 85, and 86 each coordinate L-aspartate. Residues threonine 85, aspartate 86, lysine 156, and tyrosine 274 each act as charge relay system in the active site.

This sequence belongs to the asparaginase 1 family. Homodimer.

It catalyses the reaction L-asparagine + H2O = L-aspartate + NH4(+). Chohan et al. found that divalent metal ions and EDTA do not have any significant effect on enzyme activity, indicating that activity is independent of metal ions. In another study, Hong et al. showed that activity is enhanced by Mg(2+), significantly inhibited by Co(2+) and Ni(2+), and moderately inhibited by Ca(2+), Cu(2+) and EDTA. Unfolding studies suggest that urea cannot induce complete unfolding and inactivation of the enzyme even at a concentration 8 M. However, in the presence of 4 M guanidine hydrochloride, the enzyme structure is unfolded with complete loss of enzyme activity. Functionally, catalyzes the hydrolysis of L-asparagine into L-aspartate and ammonia. Also displays D-asparaginase activity, which is about 50% of the L-asparaginase activity. Does not exhibit glutaminase activity. The protein is L-asparaginase of Thermococcus kodakarensis (strain ATCC BAA-918 / JCM 12380 / KOD1) (Pyrococcus kodakaraensis (strain KOD1)).